The primary structure comprises 1385 residues: DNA-directed RNA polymerase subunit beta' (1385 aa).

Zn(2+) contacts are provided by Cys75, Cys77, Cys90, and Cys93. Mg(2+)-binding residues include Asp466, Asp468, and Asp470. Cys809, Cys883, Cys890, and Cys893 together coordinate Zn(2+).

This sequence belongs to the RNA polymerase beta' chain family. As to quaternary structure, the RNAP catalytic core consists of 2 alpha, 1 beta, 1 beta' and 1 omega subunit. When a sigma factor is associated with the core the holoenzyme is formed, which can initiate transcription. Mg(2+) serves as cofactor. Requires Zn(2+) as cofactor.

The catalysed reaction is RNA(n) + a ribonucleoside 5'-triphosphate = RNA(n+1) + diphosphate. Functionally, DNA-dependent RNA polymerase catalyzes the transcription of DNA into RNA using the four ribonucleoside triphosphates as substrates. The sequence is that of DNA-directed RNA polymerase subunit beta' from Nitratidesulfovibrio vulgaris (strain ATCC 29579 / DSM 644 / CCUG 34227 / NCIMB 8303 / VKM B-1760 / Hildenborough) (Desulfovibrio vulgaris).